Reading from the N-terminus, the 672-residue chain is Transketolase (672 aa).

His-35 lines the substrate pocket. Residues His-75 and 124–126 (GPL) contribute to the thiamine diphosphate site. Asp-162 lines the Mg(2+) pocket. Residues Gly-163 and Asn-192 each contribute to the thiamine diphosphate site. Asn-192 and Ile-194 together coordinate Mg(2+). 3 residues coordinate substrate: His-266, Arg-361, and Ser-388. His-266 contributes to the thiamine diphosphate binding site. Glu-415 serves as the catalytic Proton donor. Phe-441 serves as a coordination point for thiamine diphosphate. Positions 465, 473, and 524 each coordinate substrate.

It belongs to the transketolase family. In terms of assembly, homodimer. Mg(2+) is required as a cofactor. Ca(2+) serves as cofactor. Requires Mn(2+) as cofactor. The cofactor is Co(2+). It depends on thiamine diphosphate as a cofactor.

The catalysed reaction is D-sedoheptulose 7-phosphate + D-glyceraldehyde 3-phosphate = aldehydo-D-ribose 5-phosphate + D-xylulose 5-phosphate. It participates in carbohydrate biosynthesis; Calvin cycle. The protein operates within carbohydrate degradation; pentose phosphate pathway. Catalyzes the transfer of a two-carbon ketol group from a ketose donor to an aldose acceptor, via a covalent intermediate with the cofactor thiamine pyrophosphate. The chain is Transketolase (tktA) from Rhodobacter capsulatus (strain ATCC BAA-309 / NBRC 16581 / SB1003).